A 216-amino-acid chain; its full sequence is Ras-related protein RabN1 (216 aa).

Gly-15 to Thr-22 is a binding site for GTP. The short motif at Thr-37–Leu-44 is the Effector region element. GTP contacts are provided by residues Asp-62–Gln-66 and Thr-128–Asp-131. The S-geranylgeranyl cysteine moiety is linked to residue Cys-216.

It belongs to the small GTPase superfamily. Rab family.

It localises to the cell membrane. In Dictyostelium discoideum (Social amoeba), this protein is Ras-related protein RabN1 (rabN1).